The chain runs to 146 residues: Ninjurin-1 (146 aa).

The disordered stretch occupies residues 1-33 (MASEAMELNGGVNRRDDPGARPQQGRMSRNTPL). Residues 1 to 75 (MASEAMELNG…ELGPSFSFYI (75 aa)) are Extracellular-facing. The segment at 37–66 (HYANKKSAAESMLDIALLMANASQLKTVLE) is required to induce plasma membrane rupture. The interval 41–52 (KKSAAESMLDIA) is helix alpha1. Residues 55–71 (MANASQLKTVLELGPSF) are helix alpha2. N57 is a glycosylation site (N-linked (GlcNAc...) asparagine). A helical transmembrane segment spans residues 76-100 (PLITLISISLTLQIIVGILLIFIVK). Topologically, residues 101 to 110 (WNLNDSSKHY) are cytoplasmic. Residues 111–135 (ILNLLENIVTALVFIVVVVNVFITA) traverse the membrane as a helical segment. Residues 136 to 146 (FGVQRPDDKTS) lie on the Extracellular side of the membrane.

It belongs to the ninjurin family. Homooligomer; in response to death stimuli, homooligomerizes into long, highly branched filaments and large, ring-shaped structures in the membrane. As to quaternary structure, homodimer; in absence of death stimuli, forms an inactive homodimer. Homooligomer; in response to death stimuli, homooligomerizes into long, highly branched filaments and large, ring-shaped structures in the membrane.

The protein resides in the cell membrane. It localises to the synaptic cell membrane. In normal conditions, NINJ1 is inactivated. In response to death stimuli, homooligomerizes and disrupts membrane integrity by introducing the hydrophilic faces of alpha1 and alpha2 helices into the hydrophobic membrane. Homooligomerization and ability to mediate plasma membrane rupture is inhibited by glycine; it is unclear whether glycine directly or indirectly inhibits homooligomerization. Its activity is regulated as follows. In response to death stimuli, homooligomerizes and disrupts membrane integrity by introducing the hydrophilic faces of alpha1 and alpha2 helices into the hydrophobic membrane. Homooligomerization and ability to mediate plasma membrane rupture is inhibited by glycine; it is unclear whether glycine directly or indirectly inhibits homooligomerization. In normal conditions, NINJ1 is autoinhibited via formation of a homodimer: in the inactive homodimer, the alpha1 and alpha2 helices (residues 41-71) form a single transmembrane region without a kink, in which hydrophilic faces of alpha1 and alpha2 helices are sequestered. Effector of various programmed cell death, such as pyroptosis and necroptosis, which mediates plasma membrane rupture (cytolysis). Oligomerizes in response to death stimuli and forms ring-like structures on the plasma membrane: acts by cutting and shedding membrane disks, like a cookie cutter, leading to membrane damage and loss that cannot be repaired by the cell. Plasma membrane rupture leads to release intracellular molecules named damage-associated molecular patterns (DAMPs) that propagate the inflammatory response. Mechanistically, mediates plasma membrane rupture by introducing hydrophilic faces of 2 alpha helices into the hydrophobic membrane. Induces plasma membrane rupture downstream of Gasdermin (GSDMA, GSDMB, GSDMC, GSDMD, or GSDME) or MLKL during pyroptosis or necroptosis, respectively. Also acts as an effector of PANoptosis and ferroptosis. Induces plasma membrane rupture in response to cell swelling caused by osmotic stress. Acts as a regulator of Toll-like receptor 4 (TLR4) signaling triggered by lipopolysaccharide (LPS) during systemic inflammation; directly binds LPS. Involved in leukocyte migration during inflammation by promoting transendothelial migration of macrophages via homotypic binding. Promotes the migration of monocytes across the brain endothelium to central nervous system inflammatory lesions. Also acts as a homophilic transmembrane adhesion molecule involved in various processes such as axonal growth, cell chemotaxis and angiogenesis. Promotes cell adhesion by mediating homophilic interactions via its extracellular N-terminal adhesion motif (N-NAM). Also involved in striated muscle growth and differentiation. The chain is Ninjurin-1 from Danio rerio (Zebrafish).